A 514-amino-acid chain; its full sequence is Maturase K (514 aa).

Belongs to the intron maturase 2 family. MatK subfamily.

It is found in the plastid. The protein resides in the chloroplast. In terms of biological role, usually encoded in the trnK tRNA gene intron. Probably assists in splicing its own and other chloroplast group II introns. This is Maturase K from Tsuga canadensis (Eastern hemlock).